Here is a 321-residue protein sequence, read N- to C-terminus: Ribose-phosphate pyrophosphokinase (321 aa).

Residues 44–46 (DGE) and 103–104 (RQ) contribute to the ATP site. Positions 137 and 179 each coordinate Mg(2+). Residue K202 is part of the active site. Residues R204, D228, and 232-236 (DTAGT) contribute to the D-ribose 5-phosphate site.

This sequence belongs to the ribose-phosphate pyrophosphokinase family. Class I subfamily. Homohexamer. Requires Mg(2+) as cofactor.

Its subcellular location is the cytoplasm. It catalyses the reaction D-ribose 5-phosphate + ATP = 5-phospho-alpha-D-ribose 1-diphosphate + AMP + H(+). It functions in the pathway metabolic intermediate biosynthesis; 5-phospho-alpha-D-ribose 1-diphosphate biosynthesis; 5-phospho-alpha-D-ribose 1-diphosphate from D-ribose 5-phosphate (route I): step 1/1. In terms of biological role, involved in the biosynthesis of the central metabolite phospho-alpha-D-ribosyl-1-pyrophosphate (PRPP) via the transfer of pyrophosphoryl group from ATP to 1-hydroxyl of ribose-5-phosphate (Rib-5-P). This is Ribose-phosphate pyrophosphokinase from Staphylococcus saprophyticus subsp. saprophyticus (strain ATCC 15305 / DSM 20229 / NCIMB 8711 / NCTC 7292 / S-41).